The sequence spans 480 residues: Chromosomal replication initiator protein DnaA (480 aa).

A domain I, interacts with DnaA modulators region spans residues 1 to 71 (MNLTKVWNTT…REQLGSVVGF (71 aa)). The tract at residues 71–139 (FPVDVRIVLA…LELHRAVRSS (69 aa)) is domain II. Positions 91–115 (SINGRHAARDTRKSDHHAPLSGGYG) are disordered. Residues 97-108 (AARDTRKSDHHA) are compositionally biased toward basic and acidic residues. A domain III, AAA+ region region spans residues 140 to 356 (MLNPRYTFDR…GCLNRVTAYA (217 aa)). Glycine 184, glycine 186, lysine 187, and threonine 188 together coordinate ATP. The tract at residues 357-480 (QMYNIPVTIE…IRERLMNSAV (124 aa)) is domain IV, binds dsDNA.

Belongs to the DnaA family. In terms of assembly, oligomerizes as a right-handed, spiral filament on DNA at oriC.

The protein localises to the cytoplasm. Functionally, plays an essential role in the initiation and regulation of chromosomal replication. ATP-DnaA binds to the origin of replication (oriC) to initiate formation of the DNA replication initiation complex once per cell cycle. Binds the DnaA box (a 9 base pair repeat at the origin) and separates the double-stranded (ds)DNA. Forms a right-handed helical filament on oriC DNA; dsDNA binds to the exterior of the filament while single-stranded (ss)DNA is stabiized in the filament's interior. The ATP-DnaA-oriC complex binds and stabilizes one strand of the AT-rich DNA unwinding element (DUE), permitting loading of DNA polymerase. After initiation quickly degrades to an ADP-DnaA complex that is not apt for DNA replication. Binds acidic phospholipids. The sequence is that of Chromosomal replication initiator protein DnaA from Roseiflexus castenholzii (strain DSM 13941 / HLO8).